A 163-amino-acid polypeptide reads, in one-letter code: Transcription elongation factor GreA (163 aa).

Residues 49–80 (ENAEYDAARDRQSEVERRILELERILENAEII) adopt a coiled-coil conformation.

This sequence belongs to the GreA/GreB family.

In terms of biological role, necessary for efficient RNA polymerase transcription elongation past template-encoded arresting sites. The arresting sites in DNA have the property of trapping a certain fraction of elongating RNA polymerases that pass through, resulting in locked ternary complexes. Cleavage of the nascent transcript by cleavage factors such as GreA or GreB allows the resumption of elongation from the new 3'terminus. GreA releases sequences of 2 to 3 nucleotides. The protein is Transcription elongation factor GreA of Mycoplasmopsis agalactiae (strain NCTC 10123 / CIP 59.7 / PG2) (Mycoplasma agalactiae).